A 489-amino-acid chain; its full sequence is Probable transporter MCH1 (489 aa).

Helical transmembrane passes span 30–50 (IAYIFALFAAITSGFVSLISL), 68–88 (MIVTVINMGMYLTPPILGIIA), and 92–112 (GPITLSLSSVLGFIPSYAYLA). An N-linked (GlcNAc...) asparagine glycan is attached at asparagine 123. 8 helical membrane-spanning segments follow: residues 132–152 (TLVCFFIIGVATSGLYFSALI), 163–183 (LLSISIPTTCYGLSSLIGSQF), 202–222 (VFKAFAWIYTVIGVMIWIATS), 279–299 (VLYIFGATIFCALGPLEMFIA), 307–327 (VLAGGHEPAMSSALLSIYALT), 351–371 (WILLLFLVVGLVTQGKIYMLS), 388–408 (FYIGIMQGIAYGGLFTIYPTI), and 421–441 (AYGTLMIAPALGSALSCLIYA). Asparagine 450 carries N-linked (GlcNAc...) asparagine glycosylation. A helical membrane pass occupies residues 462–482 (ETTALEFCAAILLTVVVTVLW).

This sequence belongs to the major facilitator superfamily.

The protein localises to the vacuole membrane. Its function is as follows. Probable transporter. This Candida glabrata (strain ATCC 2001 / BCRC 20586 / JCM 3761 / NBRC 0622 / NRRL Y-65 / CBS 138) (Yeast) protein is Probable transporter MCH1 (MCH1).